Consider the following 270-residue polypeptide: Shikimate dehydrogenase (NADP(+)) (270 aa).

Residues 14-16 (SKS) and threonine 60 contribute to the shikimate site. The active-site Proton acceptor is lysine 64. An NADP(+)-binding site is contributed by glutamate 76. Shikimate contacts are provided by asparagine 85 and aspartate 101. NADP(+) contacts are provided by residues 125 to 129 (GAGGA), 149 to 154 (NRTASR), and methionine 213. Shikimate is bound at residue tyrosine 215. Position 236 (glycine 236) interacts with NADP(+).

It belongs to the shikimate dehydrogenase family. Homodimer.

It catalyses the reaction shikimate + NADP(+) = 3-dehydroshikimate + NADPH + H(+). Its pathway is metabolic intermediate biosynthesis; chorismate biosynthesis; chorismate from D-erythrose 4-phosphate and phosphoenolpyruvate: step 4/7. Its function is as follows. Involved in the biosynthesis of the chorismate, which leads to the biosynthesis of aromatic amino acids. Catalyzes the reversible NADPH linked reduction of 3-dehydroshikimate (DHSA) to yield shikimate (SA). The polypeptide is Shikimate dehydrogenase (NADP(+)) (Stutzerimonas stutzeri (strain A1501) (Pseudomonas stutzeri)).